The sequence spans 451 residues: Phosphoglucosamine mutase (451 aa).

The active-site Phosphoserine intermediate is the Ser-102. Ser-102, Asp-243, Asp-245, and Asp-247 together coordinate Mg(2+). Ser-102 is modified (phosphoserine).

The protein belongs to the phosphohexose mutase family. It depends on Mg(2+) as a cofactor. Post-translationally, activated by phosphorylation.

It catalyses the reaction alpha-D-glucosamine 1-phosphate = D-glucosamine 6-phosphate. Catalyzes the conversion of glucosamine-6-phosphate to glucosamine-1-phosphate. The polypeptide is Phosphoglucosamine mutase (Sinorhizobium medicae (strain WSM419) (Ensifer medicae)).